The chain runs to 523 residues: Apoptosis inhibitor 5-B (523 aa).

Residues 1 to 360 (MPTVEELYRN…HQLGRKLPDF (360 aa)) are ARM-like and Heat-like helical repeats. The segment at 446–523 (VQKTDSGQKR…RGNRSRGRIY (78 aa)) is disordered. Residues 454 to 475 (KRMSDETSSTSPPKKPVVGPKR) carry the Nuclear localization signal motif. The span at 502–515 (GFQGGRGRGWGGRG) shows a compositional bias: gly residues.

This sequence belongs to the API5 family. In terms of assembly, monomer.

The protein localises to the nucleus. Functionally, may be an antiapoptotic factor. The protein is Apoptosis inhibitor 5-B (api5-b) of Xenopus laevis (African clawed frog).